The sequence spans 892 residues: Alanine--tRNA ligase (892 aa).

4 residues coordinate Zn(2+): histidine 574, histidine 578, cysteine 676, and histidine 680.

This sequence belongs to the class-II aminoacyl-tRNA synthetase family. The cofactor is Zn(2+).

It is found in the cytoplasm. The enzyme catalyses tRNA(Ala) + L-alanine + ATP = L-alanyl-tRNA(Ala) + AMP + diphosphate. Catalyzes the attachment of alanine to tRNA(Ala) in a two-step reaction: alanine is first activated by ATP to form Ala-AMP and then transferred to the acceptor end of tRNA(Ala). Also edits incorrectly charged Ser-tRNA(Ala) and Gly-tRNA(Ala) via its editing domain. This Prochlorococcus marinus (strain MIT 9313) protein is Alanine--tRNA ligase.